Here is a 36-residue protein sequence, read N- to C-terminus: Photosystem I reaction center subunit VIII (36 aa).

Residues 9 to 29 (IFVPLVGLVFPAIAMASLSLY) form a helical membrane-spanning segment.

It belongs to the PsaI family.

The protein localises to the plastid. It localises to the chloroplast thylakoid membrane. Functionally, may help in the organization of the PsaL subunit. This chain is Photosystem I reaction center subunit VIII, found in Phalaenopsis aphrodite subsp. formosana (Moth orchid).